The primary structure comprises 509 residues: ATP synthase subunit alpha (509 aa).

169-176 serves as a coordination point for ATP; the sequence is GDRQTGKT.

This sequence belongs to the ATPase alpha/beta chains family. In terms of assembly, F-type ATPases have 2 components, CF(1) - the catalytic core - and CF(0) - the membrane proton channel. CF(1) has five subunits: alpha(3), beta(3), gamma(1), delta(1), epsilon(1). CF(0) has three main subunits: a(1), b(2) and c(9-12). The alpha and beta chains form an alternating ring which encloses part of the gamma chain. CF(1) is attached to CF(0) by a central stalk formed by the gamma and epsilon chains, while a peripheral stalk is formed by the delta and b chains.

It localises to the cell inner membrane. The enzyme catalyses ATP + H2O + 4 H(+)(in) = ADP + phosphate + 5 H(+)(out). In terms of biological role, produces ATP from ADP in the presence of a proton gradient across the membrane. The alpha chain is a regulatory subunit. This Rhizobium etli (strain CIAT 652) protein is ATP synthase subunit alpha.